The primary structure comprises 319 residues: tRNA pseudouridine synthase B (319 aa).

The Nucleophile role is filled by Asp-49.

It belongs to the pseudouridine synthase TruB family. Type 1 subfamily.

It catalyses the reaction uridine(55) in tRNA = pseudouridine(55) in tRNA. Responsible for synthesis of pseudouridine from uracil-55 in the psi GC loop of transfer RNAs. The sequence is that of tRNA pseudouridine synthase B from Aeromonas salmonicida (strain A449).